Reading from the N-terminus, the 874-residue chain is MKSAEIREAFLRFFEEQGHTRVASSSLIPNNDPTLLFTNAGMNQFKDCFLGAEKRAYTRAVSSQKCVRAGGKHNDLENVGYTARHHTFFEMLGNFSFGDYFKRDAITFAWTFLTSEQWLNLPKEKLWVTVYATDDEAYDIWTKEVGVPAERMVRIGDNKGAPYASDNFWTMGDTGPCGPCTEIFYDHGPDIWGGPPGSPEEDGDRYIEIWNNVFMQFNRTADGVLHPLPAPSVDTGMGLERVSAVLQHVHSNYEIDLFQNLLAAAAKAIGCSNDGQASLKVVADHIRSCGFLIADGVLPSNEGRGYVLRRIIRRACRHGNKLGAKGSFFYQIVAALAAEMGEAFPELKSQQAHIERVLKAEEEQFAKTLEQGLRILEQDLAQLKGDVVPGDVVFKLYDTYGFPMDLTADIARERELTIDEAGFEREMDAQRERARSASAFGMDYNSLVKVDSATEFLGYDATEGQGKIIALYKDGQSVDQLGEGEEGVVVLDRTPFYAESGGQVGDTGFLQAGAARFDVRDTTKTGGAFLHHGVVTSGALVIGSPVEAKVDADVQHATSLNHSATHLLHEALRQVLGEHVQQKGSLVDSQRLRFDFSHFEAVKPEQIKQLEDIVNREIRKNTPVETELTDIETAKAKGAMALFGEKYGDTVRVLSMGGDFSVELCGGIHAKRTGDISLFKIISEGGVASGVRRIEAVTGAAALAYLNAAEEQVKEAAQLVKGNRDNLIDKLSAVLERNRQLEKQLEQLQAKAASAAGDDLSNAAVEVKGAKVLAARLDGQDGKALLALVDQLKNKLGHAVILLGSEHEGKVVLVAGVTKDLSSQLKAGDLMKQAAAAVGGKGGGRPDMAQGGGVDVAALDQALALAVPFAEQGL.

His562, His566, Cys665, and His669 together coordinate Zn(2+).

This sequence belongs to the class-II aminoacyl-tRNA synthetase family. The cofactor is Zn(2+).

Its subcellular location is the cytoplasm. The catalysed reaction is tRNA(Ala) + L-alanine + ATP = L-alanyl-tRNA(Ala) + AMP + diphosphate. Catalyzes the attachment of alanine to tRNA(Ala) in a two-step reaction: alanine is first activated by ATP to form Ala-AMP and then transferred to the acceptor end of tRNA(Ala). Also edits incorrectly charged Ser-tRNA(Ala) and Gly-tRNA(Ala) via its editing domain. The protein is Alanine--tRNA ligase of Pseudomonas putida (strain ATCC 47054 / DSM 6125 / CFBP 8728 / NCIMB 11950 / KT2440).